The following is a 511-amino-acid chain: E3 ubiquitin-protein ligase TRIM7 (511 aa).

The RING-type zinc-finger motif lies at C29–R82. S107 carries the post-translational modification Phosphoserine; by RPS6KA5. The segment at A125–L166 adopts a B box-type zinc-finger fold. Positions 130, 133, 152, and 158 each coordinate Zn(2+). Residues L166–L263 adopt a coiled-coil conformation. Residues M324–P511 form the B30.2/SPRY domain.

This sequence belongs to the TRIM/RBCC family. In terms of assembly, forms homodimers. Interacts with GNIP2. Interacts with GYG1. Interacts with RNF187 (via C-terminus). Phosphorylated at Ser-107 by RPS6KA5/MSK1, which stimulates the ubiquitin ligase activity. Post-translationally, auto-ubiquitinates via 'Lys-63'-linked polyubiquitination. In terms of tissue distribution, skeletal muscle and placenta, at lower levels in heart, brain and pancreas. Isoform 1 is widely expressed with high level in testis, kidney and heart.

The protein localises to the nucleus. It is found in the cytoplasm. Its subcellular location is the golgi apparatus. It carries out the reaction S-ubiquitinyl-[E2 ubiquitin-conjugating enzyme]-L-cysteine + [acceptor protein]-L-lysine = [E2 ubiquitin-conjugating enzyme]-L-cysteine + N(6)-ubiquitinyl-[acceptor protein]-L-lysine.. It participates in protein modification; protein ubiquitination. Functionally, E3 ubiquitin-protein ligase that have both tumor-promoting and tumor-suppressing activities and functions in several biological processes including innate immunity, regulation of ferroptosis as well as cell proliferation and migration. Acts as an antiviral effector against multiple viruses by targeting specific viral proteins for ubiquitination and degradation including norovirus NTPase protein or SARS-CoV-2 NSP5 and NSP8 proteins. Mechanistically, recognizes the C-terminal glutamine-containing motif usually generated by viral proteases that process the polyproteins and trigger their ubiquitination and subsequent degradation. Mediates 'Lys-63'-linked polyubiquitination and stabilization of the JUN coactivator RNF187 in response to growth factor signaling via the MEK/ERK pathway, thereby regulating JUN transactivation and cellular proliferation. Promotes the TLR4-mediated signaling activation through its E3 ligase domain leading to production of pro-inflammatory cytokines and type I interferon. Also plays a negative role in the regulation of exogenous cytosolic DNA virus-triggered immune response. Mechanistically, enhances the 'Lys-48'-linked ubiquitination of STING1 leading to its proteasome-dependent degradation. Mediates the ubiquitination of the SIN3-HDAC chromatin remodeling complex component BRMS1. Modulates NCOA4-mediated ferritinophagy and ferroptosis in glioblastoma cells by ubiquitinating NCOA4, leading to its degradation. Its function is as follows. (Microbial infection) Promotes Zika virus replication by mediating envelope protein E ubiquitination. The sequence is that of E3 ubiquitin-protein ligase TRIM7 (TRIM7) from Homo sapiens (Human).